A 233-amino-acid chain; its full sequence is Flagellar calcium-binding protein TB-17 (233 aa).

Residues 1 to 11 (MGCSGSKNASN) show a composition bias toward polar residues. A disordered region spans residues 1–29 (MGCSGSKNASNPKDGAASKGGKDGKTTAD). Basic and acidic residues predominate over residues 20–29 (GGKDGKTTAD). EF-hand domains lie at 48 to 83 (ESKS…ILKL), 130 to 165 (YDIF…LKEW), and 167 to 202 (VDIT…KKLQ). 13 residues coordinate Ca(2+): aspartate 61, asparagine 63, threonine 65, lysine 67, glutamate 72, aspartate 143, aspartate 145, serine 147, glutamate 154, aspartate 180, asparagine 182, serine 184, and glutamate 191. The segment at 203 to 233 (VSGDPDDEENGANEGDGANAGDGVPAAEGSA) is disordered. Over residues 214 to 225 (ANEGDGANAGDG) the composition is skewed to low complexity.

Belongs to the calflagin family.

The protein localises to the cell projection. The protein resides in the cilium. It is found in the flagellum. Functionally, may contribute to the rapid motility of the trypanosomes, playing a role either in flagellar structure or in calcium metabolism. Could alternate between a GDP-bound inactive form to a calcium/GTP-bound active form. The chain is Flagellar calcium-binding protein TB-17 (FCABP) from Trypanosoma brucei brucei.